The primary structure comprises 208 residues: Ribonuclease HII (208 aa).

Residues 12–201 form the RNase H type-2 domain; that stretch reads ELVAGVDEVG…VRALLEPVAV (190 aa). The a divalent metal cation site is built by D18, E19, and D110.

This sequence belongs to the RNase HII family. Mn(2+) serves as cofactor. Requires Mg(2+) as cofactor.

It is found in the cytoplasm. It catalyses the reaction Endonucleolytic cleavage to 5'-phosphomonoester.. Functionally, endonuclease that specifically degrades the RNA of RNA-DNA hybrids. This Ectopseudomonas mendocina (strain ymp) (Pseudomonas mendocina) protein is Ribonuclease HII.